The primary structure comprises 76 residues: U1-cyrtautoxin-As1d (76 aa).

Cystine bridges form between Cys-23/Cys-37, Cys-30/Cys-51, Cys-36/Cys-66, and Cys-69/Cys-76.

Belongs to the neurotoxin 21 family. As to expression, expressed by the venom gland.

It localises to the secreted. Its function is as follows. Neurotoxin with probable ion channel impairing activity. In vivo, is both paralytic and lethal, when injected into lepidopteran larvae. This chain is U1-cyrtautoxin-As1d, found in Apomastus schlingeri (Trap-door spider).